The chain runs to 443 residues: Xaa-Pro dipeptidase (443 aa).

Residues aspartate 246, aspartate 257, histidine 339, glutamate 384, and glutamate 423 each contribute to the Mn(2+) site.

The protein belongs to the peptidase M24B family. Bacterial-type prolidase subfamily. It depends on Mn(2+) as a cofactor.

The catalysed reaction is Xaa-L-Pro dipeptide + H2O = an L-alpha-amino acid + L-proline. Functionally, splits dipeptides with a prolyl residue in the C-terminal position. This is Xaa-Pro dipeptidase from Escherichia coli O157:H7.